Here is a 289-residue protein sequence, read N- to C-terminus: Ubiquinone biosynthesis O-methyltransferase (289 aa).

Arg-36 provides a ligand contact to S-adenosyl-L-methionine. The RPE1 insert domain occupies 50–98 (RHLSKLTYREELVGNMQHSTAAYALVREDASSRLTHKLPLEAEFEKMSN). S-adenosyl-L-methionine contacts are provided by Gly-109, Asp-130, and Leu-172.

Belongs to the methyltransferase superfamily. UbiG/COQ3 family.

The enzyme catalyses a 3-demethylubiquinol + S-adenosyl-L-methionine = a ubiquinol + S-adenosyl-L-homocysteine + H(+). It catalyses the reaction a 3-(all-trans-polyprenyl)benzene-1,2-diol + S-adenosyl-L-methionine = a 2-methoxy-6-(all-trans-polyprenyl)phenol + S-adenosyl-L-homocysteine + H(+). The protein operates within cofactor biosynthesis; ubiquinone biosynthesis. O-methyltransferase that catalyzes the 2 O-methylation steps in the ubiquinone biosynthetic pathway. This chain is Ubiquinone biosynthesis O-methyltransferase, found in Rickettsia conorii (strain ATCC VR-613 / Malish 7).